A 244-amino-acid chain; its full sequence is Dehydration-responsive element-binding protein 2E (244 aa).

A disordered region spans residues 1 to 25; sequence MEKEDNGSKQSSSASVVSSRRRRRV. The Nuclear localization signal signature appears at 20–46; it reads RRRRRVVEPVEATLQRWEEEGLARARR. The AP2/ERF DNA-binding region spans 69-134; sequence RFRGVRQRVW…YGPYARLNFP (66 aa).

This sequence belongs to the AP2/ERF transcription factor family. ERF subfamily. In terms of tissue distribution, expressed in xylem tissues, stigma, anthers and region where sepals and petals attach the peduncle.

Its subcellular location is the nucleus. In terms of biological role, transcriptional activator that binds specifically to the DNA sequence 5'-[AG]CCGAC-3'. Binding to the C-repeat/DRE element mediates abscisic acid-inducible transcription. Involved in the regulation of plant development and tolerance to abiotic stresses. The sequence is that of Dehydration-responsive element-binding protein 2E (DREB2E) from Arabidopsis thaliana (Mouse-ear cress).